Consider the following 74-residue polypeptide: Translation initiation factor IF-1 (74 aa).

The S1-like domain occupies 1-73 (MAKKDDIIEF…TKGRITYRGK (73 aa)).

The protein belongs to the IF-1 family. In terms of assembly, component of the 30S ribosomal translation pre-initiation complex which assembles on the 30S ribosome in the order IF-2 and IF-3, IF-1 and N-formylmethionyl-tRNA(fMet); mRNA recruitment can occur at any time during PIC assembly.

The protein resides in the cytoplasm. In terms of biological role, one of the essential components for the initiation of protein synthesis. Stabilizes the binding of IF-2 and IF-3 on the 30S subunit to which N-formylmethionyl-tRNA(fMet) subsequently binds. Helps modulate mRNA selection, yielding the 30S pre-initiation complex (PIC). Upon addition of the 50S ribosomal subunit IF-1, IF-2 and IF-3 are released leaving the mature 70S translation initiation complex. The chain is Translation initiation factor IF-1 from Psychrobacter sp. (strain PRwf-1).